The chain runs to 488 residues: Probable metabolite transport protein YBR241C (488 aa).

Topologically, residues 1 to 18 are cytoplasmic; it reads MAETERLMPNGGSRETKP. Residues 19–39 traverse the membrane as a helical segment; sequence LITGHLILGTIVACLGSIQYG. Topologically, residues 40-87 are vacuolar; it reads YHIAELNAPQEFLSCSRFEAPDENISYDDTWVGQHGLKQCIALTDSQY. Asparagine 63 carries N-linked (GlcNAc...) asparagine glycosylation. The chain crosses the membrane as a helical span at residues 88–108; it reads GAITSIFSIGGLFGSYYAGNW. Over 109–121 the chain is Cytoplasmic; the sequence is ANRYGRKYVSMGA. The helical transmembrane segment at 122–142 threads the bilayer; that stretch reads SAMCMVSSLLLFFSNSYLQLL. Residues 143-146 are Vacuolar-facing; the sequence is FGRF. A helical membrane pass occupies residues 147–167; that stretch reads LVGMSCGTAIVITPLFINEIA. Residues 168–178 are Cytoplasmic-facing; that stretch reads PVEWRGAMGSM. A helical membrane pass occupies residues 179 to 198; sequence NQVSINLGILLTQTLALKYA. At 199 to 204 the chain is on the vacuolar side; sequence DSYNWR. A helical membrane pass occupies residues 205–225; it reads WLLFSGSVIAVANILAWLKVD. The Cytoplasmic segment spans residues 226 to 299; sequence ESPRWLVSHG…DPSYKKPRTV (74 aa). Positions 258–279 are enriched in basic and acidic residues; sequence EIQDWQRSHGHNRDPESSEETH. The disordered stretch occupies residues 258 to 281; it reads EIQDWQRSHGHNRDPESSEETHSG. A helical transmembrane segment spans residues 300 to 320; that stretch reads ILAILSCQQFCGINSIIFYGV. Topologically, residues 321–322 are vacuolar; sequence KV. The helical transmembrane segment at 323–337 threads the bilayer; the sequence is IGKILPDYSIQVNFA. Residues 338 to 344 are Cytoplasmic-facing; it reads ISILNVV. The helical transmembrane segment at 345–364 threads the bilayer; that stretch reads VTLAASAIIDHVGRRPLLLA. Residues 365 to 390 lie on the Vacuolar side of the membrane; it reads STTVMTAMSLLISVGLTLSVSFLLVT. A helical membrane pass occupies residues 391-411; that stretch reads ATFVYIAAFAIGLGPIPFLII. Over 412–419 the chain is Cytoplasmic; it reads GELSYPQD. A helical transmembrane segment spans residues 420-442; the sequence is AATAQSFGTVCNWLATFIVGYLF. Topologically, residues 443–446 are vacuolar; sequence PIGH. Residues 447 to 463 form a helical membrane-spanning segment; it reads GLMGGYVFAIFAAIAAM. Over 464–488 the chain is Cytoplasmic; it reads FATYVYKRVPETKGKTTYSEVWAGY.

The protein belongs to the major facilitator superfamily. Sugar transporter (TC 2.A.1.1) family.

The protein localises to the vacuole membrane. The sequence is that of Probable metabolite transport protein YBR241C from Saccharomyces cerevisiae (strain ATCC 204508 / S288c) (Baker's yeast).